The primary structure comprises 88 residues: MGNWGLGIAPWVDGESELEFRRLGMQGPLEALRRREWNTQRASFSFSFLIALSPHTVDYCHSYELFNRRWHGHVLATQRPSLFILMLV.

Expressed in liver. Expression is either down-regulated or lost in hepatocellular carcinomas (HCC).

It is found in the cytoplasm. This chain is Putative cancer susceptibility gene HEPN1 protein (HEPN1), found in Homo sapiens (Human).